A 213-amino-acid polypeptide reads, in one-letter code: ATP phosphoribosyltransferase (213 aa).

It belongs to the ATP phosphoribosyltransferase family. Short subfamily. As to quaternary structure, heteromultimer composed of HisG and HisZ subunits.

The protein localises to the cytoplasm. The enzyme catalyses 1-(5-phospho-beta-D-ribosyl)-ATP + diphosphate = 5-phospho-alpha-D-ribose 1-diphosphate + ATP. The protein operates within amino-acid biosynthesis; L-histidine biosynthesis; L-histidine from 5-phospho-alpha-D-ribose 1-diphosphate: step 1/9. Its function is as follows. Catalyzes the condensation of ATP and 5-phosphoribose 1-diphosphate to form N'-(5'-phosphoribosyl)-ATP (PR-ATP). Has a crucial role in the pathway because the rate of histidine biosynthesis seems to be controlled primarily by regulation of HisG enzymatic activity. In Listeria monocytogenes serotype 4b (strain F2365), this protein is ATP phosphoribosyltransferase.